Here is a 778-residue protein sequence, read N- to C-terminus: Ent-sandaracopimaradiene synthase KSL3, chloroplastic (778 aa).

The transit peptide at 1 to 35 (MLLTSTNTLKISSQRKEWEAKDLTGMFHGQVNGRV) directs the protein to the chloroplast. 5 residues coordinate Mg(2+): D527, E531, N670, D671, and D678. The DDXXD motif signature appears at 527–531 (DDFFE).

Belongs to the terpene synthase family. Mg(2+) serves as cofactor.

Its subcellular location is the plastid. It is found in the chloroplast. The enzyme catalyses ent-copalyl diphosphate = ent-sandaracopimara-8(14),15-diene + diphosphate. The catalysed reaction is ent-copalyl diphosphate = ent-(12E)-labda-8(17),12,14-triene + diphosphate. It functions in the pathway secondary metabolite biosynthesis; terpenoid biosynthesis. Its function is as follows. Diterpene cyclase involved in the biosynthesis of labdane-related diterpenoids (LRDs) natural products. Catalyzes the cyclization of ent-CDP into ent-sandaracopimaradiene as a major, and ent-pimaradiene and ent-labdatriene as minor products. The sequence is that of Ent-sandaracopimaradiene synthase KSL3, chloroplastic from Ricinus communis (Castor bean).